The chain runs to 329 residues: NADH-quinone oxidoreductase subunit H (329 aa).

A run of 9 helical transmembrane segments spans residues 9-29 (LIKI…ATYI), 42-62 (GPSY…IKLF), 75-95 (LIFT…MAPI), 117-137 (IGFL…ILAG), 154-174 (IQLL…LMVV), 188-208 (GGFL…FLIA), 238-258 (LKWG…SFVI), 269-291 (WGFI…LSMW), and 309-329 (WKIM…IILI).

Belongs to the complex I subunit 1 family. NDH-1 is composed of 14 different subunits. Subunits NuoA, H, J, K, L, M, N constitute the membrane sector of the complex.

It localises to the cell inner membrane. The catalysed reaction is a quinone + NADH + 5 H(+)(in) = a quinol + NAD(+) + 4 H(+)(out). Its function is as follows. NDH-1 shuttles electrons from NADH, via FMN and iron-sulfur (Fe-S) centers, to quinones in the respiratory chain. The immediate electron acceptor for the enzyme in this species is believed to be ubiquinone. Couples the redox reaction to proton translocation (for every two electrons transferred, four hydrogen ions are translocated across the cytoplasmic membrane), and thus conserves the redox energy in a proton gradient. This subunit may bind ubiquinone. The chain is NADH-quinone oxidoreductase subunit H from Helicobacter acinonychis (strain Sheeba).